A 449-amino-acid polypeptide reads, in one-letter code: Glycerol-3-phosphate acyltransferase 3 (449 aa).

The next 3 helical transmembrane spans lie at 9 to 29, 146 to 166, and 170 to 190; these read FVLL…PAMF, ISVR…CVLL, and ITLA…VGFL. Residues 238–243 carry the HXXXXD motif motif; sequence HTSPID. Residues 358–378 form a helical membrane-spanning segment; the sequence is MVSYILRMMTSWAIVCNVWYL.

This sequence belongs to the 1-acyl-sn-glycerol-3-phosphate acyltransferase family.

It localises to the endoplasmic reticulum membrane. It catalyses the reaction sn-glycerol 3-phosphate + an acyl-CoA = a 1-acyl-sn-glycero-3-phosphate + CoA. The catalysed reaction is a 1-acyl-sn-glycero-3-phosphate + an acyl-CoA = a 1,2-diacyl-sn-glycero-3-phosphate + CoA. It carries out the reaction dodecanoyl-CoA + sn-glycerol 3-phosphate = 1-dodecanoyl-sn-glycerol 3-phosphate + CoA. The enzyme catalyses sn-glycerol 3-phosphate + hexadecanoyl-CoA = 1-hexadecanoyl-sn-glycero-3-phosphate + CoA. It catalyses the reaction sn-glycerol 3-phosphate + (9Z)-octadecenoyl-CoA = 1-(9Z-octadecenoyl)-sn-glycero-3-phosphate + CoA. The catalysed reaction is (9Z,12Z)-octadecadienoyl-CoA + sn-glycerol 3-phosphate = 1-(9Z,12Z)-octadecadienoyl-sn-glycero-3-phosphate + CoA. It carries out the reaction 1-tetradecanoyl-sn-glycerol 3-phosphate + (9Z)-octadecenoyl-CoA = 1-tetradecanoyl-2-(9Z)-octadecenoyl-sn-glycero-3-phosphate + CoA. The enzyme catalyses 1-hexadecanoyl-sn-glycero-3-phosphate + (9Z)-octadecenoyl-CoA = 1-hexadecanoyl-2-(9Z-octadecenoyl)-sn-glycero-3-phosphate + CoA. It catalyses the reaction 1-(9Z-octadecenoyl)-sn-glycero-3-phosphate + (9Z)-octadecenoyl-CoA = 1,2-di-(9Z-octadecenoyl)-sn-glycero-3-phosphate + CoA. The catalysed reaction is 1-(6Z,9Z,12Z-octadecatrienoyl)-sn-glycero-3-phosphate + (9Z)-octadecenoyl-CoA = (6Z,9Z,12Z)-octadecatrienoyl-2-(9Z)-octadecenoyl-sn-glycero-3-phosphate + CoA. It carries out the reaction 1-(9Z,12Z,15Z)-octadecatrienoyl-sn-glycero-3-phosphate + (9Z)-octadecenoyl-CoA = 1-(9Z,12Z,15Z)-octadecatrienoyl-2-(9Z)-octadecenoyl-sn-glycero-3-phosphate + CoA. The enzyme catalyses 1-(9Z-octadecenoyl)-sn-glycero-3-phosphate + tetradecanoyl-CoA = 1-(9Z)-octadecenoyl-2-tetradecanoyl-sn-glycero-3-phosphate + CoA. It catalyses the reaction 1-(9Z-octadecenoyl)-sn-glycero-3-phosphate + hexadecanoyl-CoA = 1-(9Z)-octadecenoyl-2-hexadecanoyl-sn-glycero-3-phosphate + CoA. The catalysed reaction is 1-(9Z-octadecenoyl)-sn-glycero-3-phosphate + octadecanoyl-CoA = 1-(9Z-octadecenoyl)-2-octadecanoyl-sn-glycero-3-phosphate + CoA. It carries out the reaction 1-(9Z-octadecenoyl)-sn-glycero-3-phosphate + (9Z,12Z)-octadecadienoyl-CoA = 1-(9Z)-octadecenoyl-2-(9Z,12Z)-octadecadienoyl-sn-glycero-3-phosphate + CoA. The enzyme catalyses 1-(5Z,8Z,11Z,14Z-eicosatetraenoyl)-sn-glycero-3-phosphate + (9Z)-octadecenoyl-CoA = 1-(5Z,8Z,11Z,14Z)-eicosatetraenoyl-2-(9Z)-octadecenoyl-sn-glycero-3-phosphate + CoA. The protein operates within glycerolipid metabolism; triacylglycerol biosynthesis. Its pathway is phospholipid metabolism; CDP-diacylglycerol biosynthesis; CDP-diacylglycerol from sn-glycerol 3-phosphate: step 1/3. Functionally, converts glycerol-3-phosphate to 1-acyl-sn-glycerol-3-phosphate (lysophosphatidic acid or LPA) by incorporating an acyl moiety at the sn-1 position of the glycerol backbone. Also converts LPA into 1,2-diacyl-sn-glycerol-3-phosphate (phosphatidic acid or PA) by incorporating an acyl moiety at the sn-2 position of the glycerol backbone. Protects cells against lipotoxicity. This is Glycerol-3-phosphate acyltransferase 3 from Danio rerio (Zebrafish).